Consider the following 322-residue polypeptide: Triosephosphate isomerase, chloroplastic (322 aa).

The N-terminal 67 residues, 1–67 (MAVVSTSLAS…RRCPRGVVAM (67 aa)), are a transit peptide targeting the chloroplast. Substrate contacts are provided by asparagine 78 and lysine 80. The Electrophile role is filled by histidine 162. Glutamate 232 functions as the Proton acceptor in the catalytic mechanism.

This sequence belongs to the triosephosphate isomerase family. As to quaternary structure, homodimer.

The protein resides in the plastid. It localises to the chloroplast. The catalysed reaction is D-glyceraldehyde 3-phosphate = dihydroxyacetone phosphate. It functions in the pathway carbohydrate biosynthesis; Calvin cycle. The chain is Triosephosphate isomerase, chloroplastic (TPIP1) from Spinacia oleracea (Spinach).